A 76-amino-acid chain; its full sequence is DNA-directed RNA polymerase subunit omega (76 aa).

This sequence belongs to the RNA polymerase subunit omega family. In cyanobacteria the RNAP catalytic core is composed of 2 alpha, 1 beta, 1 beta', 1 gamma and 1 omega subunit. When a sigma factor is associated with the core the holoenzyme is formed, which can initiate transcription.

The enzyme catalyses RNA(n) + a ribonucleoside 5'-triphosphate = RNA(n+1) + diphosphate. Promotes RNA polymerase assembly. Latches the N- and C-terminal regions of the beta' subunit thereby facilitating its interaction with the beta and alpha subunits. The chain is DNA-directed RNA polymerase subunit omega from Synechococcus elongatus (strain ATCC 33912 / PCC 7942 / FACHB-805) (Anacystis nidulans R2).